A 211-amino-acid polypeptide reads, in one-letter code: Thiamine-phosphate synthase (211 aa).

4-amino-2-methyl-5-(diphosphooxymethyl)pyrimidine contacts are provided by residues 37-41 and N69; that span reads QLRIK. Mg(2+) contacts are provided by D70 and D89. S108 serves as a coordination point for 4-amino-2-methyl-5-(diphosphooxymethyl)pyrimidine. 2-[(2R,5Z)-2-carboxy-4-methylthiazol-5(2H)-ylidene]ethyl phosphate is bound at residue 134-136; it reads TQT. K137 provides a ligand contact to 4-amino-2-methyl-5-(diphosphooxymethyl)pyrimidine. 2-[(2R,5Z)-2-carboxy-4-methylthiazol-5(2H)-ylidene]ethyl phosphate is bound by residues G166 and 186–187; that span reads VS.

It belongs to the thiamine-phosphate synthase family. Mg(2+) serves as cofactor.

It catalyses the reaction 2-[(2R,5Z)-2-carboxy-4-methylthiazol-5(2H)-ylidene]ethyl phosphate + 4-amino-2-methyl-5-(diphosphooxymethyl)pyrimidine + 2 H(+) = thiamine phosphate + CO2 + diphosphate. The enzyme catalyses 2-(2-carboxy-4-methylthiazol-5-yl)ethyl phosphate + 4-amino-2-methyl-5-(diphosphooxymethyl)pyrimidine + 2 H(+) = thiamine phosphate + CO2 + diphosphate. The catalysed reaction is 4-methyl-5-(2-phosphooxyethyl)-thiazole + 4-amino-2-methyl-5-(diphosphooxymethyl)pyrimidine + H(+) = thiamine phosphate + diphosphate. It functions in the pathway cofactor biosynthesis; thiamine diphosphate biosynthesis; thiamine phosphate from 4-amino-2-methyl-5-diphosphomethylpyrimidine and 4-methyl-5-(2-phosphoethyl)-thiazole: step 1/1. Its function is as follows. Condenses 4-methyl-5-(beta-hydroxyethyl)thiazole monophosphate (THZ-P) and 2-methyl-4-amino-5-hydroxymethyl pyrimidine pyrophosphate (HMP-PP) to form thiamine monophosphate (TMP). The polypeptide is Thiamine-phosphate synthase (Escherichia coli (strain SE11)).